A 199-amino-acid chain; its full sequence is Holliday junction branch migration complex subunit RuvA (199 aa).

The segment at 1 to 62 (MIAYIKGLLA…EDGIQFFGFA (62 aa)) is domain I. Residues 63–141 (KEDEKECFLL…GMAAVEHSTL (79 aa)) form a domain II region. Residues 142 to 152 (QQSVITTGSGD) are flexible linker. A domain III region spans residues 152-199 (DEAVEALLALGYSQGEARDAVKKAQKSAPEEDLSALIKIALKELAPSR).

The protein belongs to the RuvA family. In terms of assembly, homotetramer. Forms an RuvA(8)-RuvB(12)-Holliday junction (HJ) complex. HJ DNA is sandwiched between 2 RuvA tetramers; dsDNA enters through RuvA and exits via RuvB. An RuvB hexamer assembles on each DNA strand where it exits the tetramer. Each RuvB hexamer is contacted by two RuvA subunits (via domain III) on 2 adjacent RuvB subunits; this complex drives branch migration. In the full resolvosome a probable DNA-RuvA(4)-RuvB(12)-RuvC(2) complex forms which resolves the HJ.

It is found in the cytoplasm. Its function is as follows. The RuvA-RuvB-RuvC complex processes Holliday junction (HJ) DNA during genetic recombination and DNA repair, while the RuvA-RuvB complex plays an important role in the rescue of blocked DNA replication forks via replication fork reversal (RFR). RuvA specifically binds to HJ cruciform DNA, conferring on it an open structure. The RuvB hexamer acts as an ATP-dependent pump, pulling dsDNA into and through the RuvAB complex. HJ branch migration allows RuvC to scan DNA until it finds its consensus sequence, where it cleaves and resolves the cruciform DNA. The sequence is that of Holliday junction branch migration complex subunit RuvA from Desulforamulus reducens (strain ATCC BAA-1160 / DSM 100696 / MI-1) (Desulfotomaculum reducens).